The sequence spans 528 residues: MTTIERITTPRIRIFDTTLRDGEQSPGCSMSPPQKLVMARALDELGVDIIETGFPASSQSDREAMALIGRELRRPSLSLAVLSRCLQADIETSARALEAAANPRLHVFLSTSPLHREHKLRMTREQVLESVRKHVSLARSYIDDVEFSAEDATRTELDYLIEVARVAIAAGATTINLPDTVGFTTPEEIRAMFQQVIAGVADVPNAANVIFSAHCHNDLGLAVANSLAAIEGGARQVECTVNGIGERAGNCSLEEIAMVLKVRQAFYEQDSSINTPRIVGTSQLLQRLVGMPVQRNKAIVGANAFAHESGIHQHGMLRHRGTYEIMRPEDVGWEDSQMVLGRHSGRAAVEARLRALGFWLDEDELKLVFEQFKGLCEQQRVVTDADLQTLMQGGSNAQGYRLASMTISDVGSRANALVELSDPDGNRVAETAQGDGPVDALFGALSAATGVQLMLDSYHVHSVGIGADARGEANLSVRHEGVEYDGTGTSKDIIEASALAWLDVANRLLRQRQATAHNSTDVPTPATA.

One can recognise a Pyruvate carboxyltransferase domain in the interval 12–279; sequence IRIFDTTLRD…DSSINTPRIV (268 aa). Mn(2+) is bound by residues Asp21, His214, His216, and Asn250. The tract at residues 401–528 is regulatory domain; that stretch reads RLASMTISDV…STDVPTPATA (128 aa).

Belongs to the alpha-IPM synthase/homocitrate synthase family. LeuA type 1 subfamily. Homodimer. Mn(2+) is required as a cofactor.

The protein resides in the cytoplasm. The enzyme catalyses 3-methyl-2-oxobutanoate + acetyl-CoA + H2O = (2S)-2-isopropylmalate + CoA + H(+). The protein operates within amino-acid biosynthesis; L-leucine biosynthesis; L-leucine from 3-methyl-2-oxobutanoate: step 1/4. Catalyzes the condensation of the acetyl group of acetyl-CoA with 3-methyl-2-oxobutanoate (2-ketoisovalerate) to form 3-carboxy-3-hydroxy-4-methylpentanoate (2-isopropylmalate). This chain is 2-isopropylmalate synthase, found in Stenotrophomonas maltophilia (strain K279a).